The sequence spans 351 residues: E3 ubiquitin-protein ligase TRIM63 (351 aa).

The RING-type zinc finger occupies 23–79; the sequence is CPICLEMFTKPVVILPCQHNLCRKCANDIFQAANPYWTNRGGSVSMSGGRFRCPSCR. The tract at residues 74 to 218 is interaction with TTN; it reads RCPSCRHEVI…LSHKFDALYA (145 aa). A B box-type zinc finger spans residues 117–159; it reads GSHPMCKEHEDEKINIYCLTCEVPTCSLCKVFGAHQACEVAPL. Residues Cys-122, His-125, Cys-145, and His-151 each coordinate Zn(2+). The stretch at 189–269 forms a coiled coil; sequence SQLEDSCRVT…VETAIQSLDE (81 aa). The COS domain maps to 267-325; the sequence is LDEPGGATFLLSAKPLIKSIVEASKGCQLGKTEQGFENMDYFTLNLEHIAEALRAIDFG. Residues 326–345 show a composition bias toward acidic residues; sequence TDEEEEFTEEEEEEDQEEGV. Residues 326–351 form a disordered region; that stretch reads TDEEEEFTEEEEEEDQEEGVSTEGHQ.

Homodimer. Homooligomer and heterooligomer. Interacts with SUMO2, titin/TTN and GMEB1. Interacts with TRIM54 and probably with TRIM55 and TNNI3. Forms a ternary complex with RACK1 and PRKCE. Interacts with CKM. As to expression, muscle specific. Selectively expressed in heart and skeletal muscle.

The protein resides in the cytoplasm. Its subcellular location is the nucleus. It localises to the myofibril. It is found in the sarcomere. The protein localises to the m line. The protein resides in the z line. The enzyme catalyses S-ubiquitinyl-[E2 ubiquitin-conjugating enzyme]-L-cysteine + [acceptor protein]-L-lysine = [E2 ubiquitin-conjugating enzyme]-L-cysteine + N(6)-ubiquitinyl-[acceptor protein]-L-lysine.. It functions in the pathway protein modification; protein ubiquitination. Its function is as follows. E3 ubiquitin ligase. Mediates the ubiquitination and subsequent proteasomal degradation of CKM, GMEB1 and HIBADH. Regulates the proteasomal degradation of muscle proteins under amino acid starvation, where muscle protein is catabolized to provide other organs with amino acids. Inhibits de novo skeletal muscle protein synthesis under amino acid starvation. Regulates proteasomal degradation of cardiac troponin I/TNNI3 and probably of other sarcomeric-associated proteins. May play a role in striated muscle atrophy and hypertrophy by regulating an anti-hypertrophic PKC-mediated signaling pathway. May regulate the organization of myofibrils through TTN in muscle cells. In Rattus norvegicus (Rat), this protein is E3 ubiquitin-protein ligase TRIM63 (Trim63).